Consider the following 753-residue polypeptide: Protein-lysine N-methyltransferase SMYD4 (753 aa).

112-114 is an S-adenosyl-L-methionine binding site; the sequence is RSA. The SET domain occupies 186-528; it reads DGVSVYFSSD…AGQEILHCYG (343 aa). Zn(2+)-binding residues include Cys-246, Cys-249, Cys-259, Cys-262, Cys-268, Cys-272, His-281, and Cys-285. The segment at 246-285 adopts an MYND-type zinc-finger fold; sequence CHHCLSQSLSFVPCPKCSYARYCGESCQKDAWDQWHQWEC. S-adenosyl-L-methionine-binding positions include 467 to 468 and Tyr-527; that span reads NH.

It belongs to the class V-like SAM-binding methyltransferase superfamily.

Its subcellular location is the nucleus. It is found in the cytoplasm. It catalyses the reaction L-lysyl-[protein] + S-adenosyl-L-methionine = N(6)-methyl-L-lysyl-[protein] + S-adenosyl-L-homocysteine + H(+). Its function is as follows. Protein-lysine N-methyltransferase. Monomethylates PRMT5, modulating its transcriptional activity. May also act as a histone methyltransferase. Plays a critical role in cardiac development. Acts as a key epigenetic regulator of gene expression during cardiac development via its dual activities as a methyltransferase and negative regulator of HDAC1. In Danio rerio (Zebrafish), this protein is Protein-lysine N-methyltransferase SMYD4 (smyd4).